The primary structure comprises 270 residues: Putative ABC transporter ATP-binding protein MG304 homolog (270 aa).

The ABC transporter domain maps to 2–232; sequence LNVTNLSFTY…LHLFHQHHFT (231 aa). Position 36–43 (36–43) interacts with ATP; sequence GHNGSGKS.

The protein belongs to the ABC transporter superfamily.

The sequence is that of Putative ABC transporter ATP-binding protein MG304 homolog from Mycoplasma pneumoniae (strain ATCC 29342 / M129 / Subtype 1) (Mycoplasmoides pneumoniae).